We begin with the raw amino-acid sequence, 599 residues long: Elongation factor 4 (599 aa).

Positions 4 to 186 (SKIRNFSIIA…SIVEKVPAPK (183 aa)) constitute a tr-type G domain. GTP is bound by residues 16–21 (DHGKST) and 133–136 (NKVD).

This sequence belongs to the TRAFAC class translation factor GTPase superfamily. Classic translation factor GTPase family. LepA subfamily.

The protein resides in the cell inner membrane. It carries out the reaction GTP + H2O = GDP + phosphate + H(+). In terms of biological role, required for accurate and efficient protein synthesis under certain stress conditions. May act as a fidelity factor of the translation reaction, by catalyzing a one-codon backward translocation of tRNAs on improperly translocated ribosomes. Back-translocation proceeds from a post-translocation (POST) complex to a pre-translocation (PRE) complex, thus giving elongation factor G a second chance to translocate the tRNAs correctly. Binds to ribosomes in a GTP-dependent manner. The polypeptide is Elongation factor 4 (Syntrophotalea carbinolica (strain DSM 2380 / NBRC 103641 / GraBd1) (Pelobacter carbinolicus)).